We begin with the raw amino-acid sequence, 563 residues long: GTPase Obg (563 aa).

The Obg domain occupies 2 to 168 (SDFVDRVTVH…RDVILELKSI (167 aa)). Residues 169–349 (ADVALVGFPS…LNFALSALVH (181 aa)) enclose the OBG-type G domain. Residues 175 to 182 (GFPSAGKS), 200 to 204 (FTTLV), 221 to 224 (DVPG), 301 to 304 (NKID), and 330 to 332 (STA) contribute to the GTP site. Mg(2+) contacts are provided by Ser-182 and Thr-202. The 87-residue stretch at 383–469 (DEGGSALEFT…ARMVEFDWDP (87 aa)) folds into the OCT domain. Residues 529-563 (RKAGHWADPTVDDDRHDETSLFGHGESSEDGETEE) form a disordered region.

It belongs to the TRAFAC class OBG-HflX-like GTPase superfamily. OBG GTPase family. As to quaternary structure, monomer. It depends on Mg(2+) as a cofactor.

The protein resides in the cytoplasm. Its function is as follows. An essential GTPase which binds GTP, GDP and possibly (p)ppGpp with moderate affinity, with high nucleotide exchange rates and a fairly low GTP hydrolysis rate. Plays a role in control of the cell cycle, stress response, ribosome biogenesis and in those bacteria that undergo differentiation, in morphogenesis control. The sequence is that of GTPase Obg from Bifidobacterium longum (strain NCC 2705).